We begin with the raw amino-acid sequence, 151 residues long: Acidic phospholipase A2 6 (151 aa).

An N-terminal signal peptide occupies residues 1 to 27 (MYPAHLLVLLAVCVSLLGAASIPARPL). 7 cysteine pairs are disulfide-bonded: Cys38–Cys104, Cys54–Cys151, Cys56–Cys72, Cys71–Cys132, Cys78–Cys125, Cys88–Cys118, and Cys111–Cys123. Positions 55, 57, and 59 each coordinate Ca(2+). His75 is an active-site residue. Asp76 lines the Ca(2+) pocket. Residue Asp126 is part of the active site.

The protein belongs to the phospholipase A2 family. Group I subfamily. D49 sub-subfamily. Requires Ca(2+) as cofactor. As to expression, expressed by the venom gland.

It localises to the secreted. The enzyme catalyses a 1,2-diacyl-sn-glycero-3-phosphocholine + H2O = a 1-acyl-sn-glycero-3-phosphocholine + a fatty acid + H(+). In terms of biological role, PLA2 catalyzes the calcium-dependent hydrolysis of the 2-acyl groups in 3-sn-phosphoglycerides. The chain is Acidic phospholipase A2 6 from Tropidechis carinatus (Australian rough-scaled snake).